Consider the following 303-residue polypeptide: tRNA dimethylallyltransferase (303 aa).

An ATP-binding site is contributed by 11–18 (GPTGVGKS). Position 13-18 (13-18 (TGVGKS)) interacts with substrate. Interaction with substrate tRNA regions lie at residues 36–39 (DSRQ) and 159–163 (QRVLR).

This sequence belongs to the IPP transferase family. In terms of assembly, monomer. The cofactor is Mg(2+).

The enzyme catalyses adenosine(37) in tRNA + dimethylallyl diphosphate = N(6)-dimethylallyladenosine(37) in tRNA + diphosphate. Catalyzes the transfer of a dimethylallyl group onto the adenine at position 37 in tRNAs that read codons beginning with uridine, leading to the formation of N6-(dimethylallyl)adenosine (i(6)A). This is tRNA dimethylallyltransferase from Lawsonia intracellularis (strain PHE/MN1-00).